The sequence spans 681 residues: Replication protein E1 (681 aa).

The short motif at 88–90 is the Nuclear localization signal element; sequence KRK. 3 positions are modified to phosphoserine; by host: serine 94, serine 98, and serine 111. The Nuclear export signal motif lies at 110–119; the sequence is LSPRLDAIKL. The tract at residues 124–221 is disordered; sequence AKAKRRLFEL…SDLQSTSTGK (98 aa). Composition is skewed to polar residues over residues 138 to 158 and 170 to 184; these read YGQT…SSET and VVQS…NGRQ. The segment covering 185-207 has biased composition (basic and acidic residues); the sequence is NNDEGSGRNVGEHGSQEEERAGG. A DNA-binding region region spans residues 218 to 384; it reads STGKGAGGVV…QTMVGHAMED (167 aa). The region spanning 483-633 is the SF3 helicase domain; that stretch reads VEFIPFLCAF…FPVTTQGEPM (151 aa). ATP is bound at residue 509-516; that stretch reads GPADTGKS. A Glycyl lysine isopeptide (Lys-Gly) (interchain with G-Cter in SUMO) cross-link involves residue lysine 590. The segment at 657–681 is disordered; it reads PEDEEEHGNPSEPFRCVPGQNARTI.

This sequence belongs to the papillomaviridae E1 protein family. In terms of assembly, can form hexamers. Interacts with E2 protein; this interaction increases E1 DNA binding specificity. Interacts with host DNA polymerase subunit POLA2. Interacts with host single stranded DNA-binding protein RPA1. Interacts with host TOP1; this interaction stimulates the enzymatic activity of TOP1. In terms of processing, phosphorylated. Sumoylated.

Its subcellular location is the host nucleus. The catalysed reaction is Couples ATP hydrolysis with the unwinding of duplex DNA by translocating in the 3'-5' direction.. It carries out the reaction ATP + H2O = ADP + phosphate + H(+). In terms of biological role, ATP-dependent DNA 3'-5' helicase required for initiation of viral DNA replication. It forms a complex with the viral E2 protein. The E1-E2 complex binds to the replication origin which contains binding sites for both proteins. During the initial step, a dimer of E1 interacts with a dimer of protein E2 leading to a complex that binds the viral origin of replication with high specificity. Then, a second dimer of E1 displaces the E2 dimer in an ATP-dependent manner to form the E1 tetramer. Following this, two E1 monomers are added to each half of the site, which results in the formation of two E1 trimers on the viral ori. Subsequently, two hexamers will be created. The double hexamer acts as a bi-directional helicase machinery and unwinds the viral DNA and then recruits the host DNA polymerase to start replication. In Homo sapiens (Human), this protein is Replication protein E1.